Reading from the N-terminus, the 136-residue chain is Plastocyanin (136 aa).

The first 34 residues, 1 to 34 (MSLVFNLVKRLQLILLSLVVGGLAVAFLSNPAAA), serve as a signal peptide directing secretion. The Plastocyanin-like domain maps to 35–136 (ETYIVKMGSD…GMVGKIIVNG (102 aa)). The Cu cation site is built by H73, C120, H123, and M128.

This sequence belongs to the plastocyanin family. It depends on Cu(2+) as a cofactor.

Its subcellular location is the cellular thylakoid membrane. Participates in electron transfer between P700 and the cytochrome b6-f complex in photosystem I. The polypeptide is Plastocyanin (Synechococcus sp. (strain JA-2-3B'a(2-13)) (Cyanobacteria bacterium Yellowstone B-Prime)).